Reading from the N-terminus, the 103-residue chain is UPF0145 protein BC_5181 (103 aa).

The protein belongs to the UPF0145 family.

This is UPF0145 protein BC_5181 from Bacillus cereus (strain ATCC 14579 / DSM 31 / CCUG 7414 / JCM 2152 / NBRC 15305 / NCIMB 9373 / NCTC 2599 / NRRL B-3711).